The following is a 570-amino-acid chain: Phytoene desaturase (570 aa).

Residues 547 to 567 (LFQGFLGALVAILLAYYYLVI) form a helical membrane-spanning segment.

This sequence belongs to the carotenoid/retinoid oxidoreductase family. NAD(+) serves as cofactor.

It localises to the membrane. It catalyses the reaction 15-cis-phytoene + A = all-trans-phytofluene + AH2. The catalysed reaction is all-trans-phytofluene + A = all-trans-zeta-carotene + AH2. The enzyme catalyses all-trans-zeta-carotene + A = all-trans-neurosporene + AH2. It carries out the reaction all-trans-neurosporene + A = all-trans-lycopene + AH2. It functions in the pathway carotenoid biosynthesis. In terms of biological role, phytoene desaturase; part of the car gene cluster that mediates the biosynthesis of neurosporaxanthin, a carboxylic apocarotenoid acting as an essential protective pigments and leading to orange pigmentation. Converts phytoene into lycopene via the intermediates phytofluene, zeta-carotene and neurosporene; and further desaturates gamma-carotene into torulene. Neurosporaxanthin is synthesized from geranyl-geranyl pyrophosphate (GGPP) through several enzymatic activities. Phytoene synthase activity performed by the bifunctional enzyme carAR first produces phytoene from geranyl-geranyl pyrophosphate (GGPP). The phytoene dehydrogenase carB then introduces 4 desaturations to lead to lycopene which is substrate of the carotene cyclase activity of carAR that leads to the production of gamma-carotene. CarB then performs a 5th desaturation reaction to yield torulene. Torulene is the substrate of the dioxidase carT that breaks the molecule, removing five carbon atoms to yield beta-apo-4'-carotenal, whereas the aldehyde dehydrogenase carD mediates the last step by converting beta-apo-4'-carotenal into neurosporaxanthin. This is Phytoene desaturase from Fusarium fujikuroi (Bakanae and foot rot disease fungus).